Consider the following 239-residue polypeptide: N-glycosylase/DNA lyase (239 aa).

8-oxoguanine is bound by residues Q24, S51, and W62. The segment at 118–182 (ERYYEDMTLL…EDVRIIKLTR (65 aa)) is helix-hairpin-helix. The active-site Schiff-base intermediate with DNA is the K142. 8-oxoguanine contacts are provided by F146 and P172. D174 is an active-site residue. D208 and W212 together coordinate 8-oxoguanine.

It belongs to the archaeal N-glycosylase/DNA lyase (AGOG) family.

The catalysed reaction is 2'-deoxyribonucleotide-(2'-deoxyribose 5'-phosphate)-2'-deoxyribonucleotide-DNA = a 3'-end 2'-deoxyribonucleotide-(2,3-dehydro-2,3-deoxyribose 5'-phosphate)-DNA + a 5'-end 5'-phospho-2'-deoxyribonucleoside-DNA + H(+). In terms of biological role, DNA repair enzyme that is part of the base excision repair (BER) pathway; protects from oxidative damage by removing the major product of DNA oxidation, 8-oxoguanine (GO), from single- and double-stranded DNA substrates. This chain is N-glycosylase/DNA lyase, found in Pyrococcus horikoshii (strain ATCC 700860 / DSM 12428 / JCM 9974 / NBRC 100139 / OT-3).